Here is a 310-residue protein sequence, read N- to C-terminus: Ribosomal protein L11 methyltransferase (310 aa).

The S-adenosyl-L-methionine site is built by threonine 153, glycine 174, aspartate 196, and asparagine 239.

The protein belongs to the methyltransferase superfamily. PrmA family.

The protein resides in the cytoplasm. It catalyses the reaction L-lysyl-[protein] + 3 S-adenosyl-L-methionine = N(6),N(6),N(6)-trimethyl-L-lysyl-[protein] + 3 S-adenosyl-L-homocysteine + 3 H(+). Functionally, methylates ribosomal protein L11. In Janthinobacterium sp. (strain Marseille) (Minibacterium massiliensis), this protein is Ribosomal protein L11 methyltransferase.